A 354-amino-acid chain; its full sequence is Serum paraoxonase/arylesterase 2 (354 aa).

N-linked (GlcNAc...) asparagine glycosylation occurs at Asn29. A disulfide bridge links Cys42 with Cys352. Residues Glu53 and Asp54 each coordinate Ca(2+). The active-site Proton acceptor is the His114. Residues Ile116, Asn167, Asp168, and Asn223 each contribute to the Ca(2+) site. Asn254 is a glycosylation site (N-linked (GlcNAc...) asparagine). Ca(2+) is bound by residues Asp268 and Asn269. Asn269 and Asn323 each carry an N-linked (GlcNAc...) asparagine glycan.

Belongs to the paraoxonase family. It depends on Ca(2+) as a cofactor. Post-translationally, glycosylated. The signal sequence is not cleaved.

Its subcellular location is the membrane. The enzyme catalyses a phenyl acetate + H2O = a phenol + acetate + H(+). The catalysed reaction is An aryl dialkyl phosphate + H2O = dialkyl phosphate + an aryl alcohol.. In terms of biological role, the absence of paraoxonase activity in turkey and chicken blood and in turkey liver indicates that PON2, if expressed, does not hydrolyze paraoxon. The protein is Serum paraoxonase/arylesterase 2 (PON2) of Gallus gallus (Chicken).